We begin with the raw amino-acid sequence, 391 residues long: Ammonium transporter Amt1 (391 aa).

Over 1-7 (MSDGNVA) the chain is Extracellular. A helical transmembrane segment spans residues 8-27 (WILASTALVMLMVPGVGFFY). Residues 28 to 38 (AGMVRRKNAVN) lie on the Cytoplasmic side of the membrane. Residues 39–57 (MIALSFISLIITVLLWIFY) form a helical membrane-spanning segment. Residues 58-89 (GYSVSFGNDISGIIGGLNYALLSGVKGEDLLF) lie on the Extracellular side of the membrane. Residues 90–106 (MMYQMMFAAVTIAILTS) form a helical membrane-spanning segment. The Cytoplasmic segment spans residues 107-113 (AIAERAK). The chain crosses the membrane as a helical span at residues 114-137 (VSSFILLSALWLTFVYAPFAHWLW). Topologically, residues 138-152 (GGGWLAKLGALDFAG) are extracellular. A helical transmembrane segment spans residues 153-170 (GMVVHISSGFAALAVAMT). Residues 171-188 (IGKRAGFEEYSIEPHSIP) are Cytoplasmic-facing. Residues 189-208 (LTLIGAALLWFGWFGFNGGS) traverse the membrane as a helical segment. At 209 to 217 (ALAANDVAI) the chain is on the extracellular side. The chain crosses the membrane as a helical span at residues 218–237 (NAVVVTNTSAAVAGFVWMVI). The Cytoplasmic portion of the chain corresponds to 238–245 (GWIKGKPG). Residues 246 to 263 (SLGIVSGAIAGLAAITPA) traverse the membrane as a helical segment. Residues 264–268 (AGFVD) are Extracellular-facing. Residues 269–287 (VKGAIVIGLVAGIVCYLAM) form a helical membrane-spanning segment. Over 288–300 (DFRIKKKIDESLD) the chain is Cytoplasmic. The helical transmembrane segment at 301–319 (AWAIHGIGGLWGSVAVGIL) threads the bilayer. Topologically, residues 320-337 (ANPEVNGYAGLLFGNPQL) are extracellular. The helical transmembrane segment at 338–363 (LVSQLIAVASTTAYAFLVTLILAKAV) threads the bilayer. The Cytoplasmic segment spans residues 364-391 (DAAVGLRVSSQEEYVGLDLSQHEEVAYT).

This sequence belongs to the ammonia transporter channel (TC 1.A.11.2) family. Homotrimer.

It localises to the cell membrane. Involved in the uptake of ammonium/ammonia (NH(4)(+)/NH(3)). Transport is electrogenic. Transport the ammonium and methylammonium cation with high specificity. This chain is Ammonium transporter Amt1, found in Archaeoglobus fulgidus (strain ATCC 49558 / DSM 4304 / JCM 9628 / NBRC 100126 / VC-16).